Here is a 459-residue protein sequence, read N- to C-terminus: MLKKTAPNSPKRRRCSSFAAVDLVGSANRTFMVSVSLPKELILEILKRLPAKSVKRFHCVSKQWASMLSCPHFRELFLTRSSSAQPRLLFAIEKHNQWSLFSLPQRLTPYEKSSSSSVVVTPEFHMKFPPDGMLIYPRHDRRFSFGYASGLMYFYGMWINEHDYDGVPVICNPLTGRYASLPFLERYRKAFSFFGFDPIEKQYKVLFMAYPSGPDHHTVLTFGTGEMSWRKIECSVKHDIVSDGICINGVMYYLGDTSEFMTAFVVVCFDVRSETFSFIYPGSYCEVINYKGKLGLVFCDDYTDDAIELRLWVLEDKEKIEWSKYAYKLKDEKFSAHYVSIVGVSAAGEIVLSMADFTSKQPFYVFYYNPERNTLQCTEIQGFEEHHGTFDRRSRVRVFVDDCSSFYRFADHVEYLNVDEPKLLKSKIYDGPNAKIEWEEEEEEDEDEDQEKEEEDQWS.

The 46-residue stretch at 31-76 (FMVSVSLPKELILEILKRLPAKSVKRFHCVSKQWASMLSCPHFREL) folds into the F-box domain. Residues 434–459 (AKIEWEEEEEEDEDEDQEKEEEDQWS) form a disordered region. Positions 438–459 (WEEEEEEDEDEDQEKEEEDQWS) are enriched in acidic residues.

This chain is F-box protein At1g47340, found in Arabidopsis thaliana (Mouse-ear cress).